A 1444-amino-acid chain; its full sequence is DNA polymerase III PolC-type (1444 aa).

The 157-residue stretch at 428-584 folds into the Exonuclease domain; the sequence is YCVFDVETTG…FDAEATAYLA (157 aa).

This sequence belongs to the DNA polymerase type-C family. PolC subfamily.

Its subcellular location is the cytoplasm. The catalysed reaction is DNA(n) + a 2'-deoxyribonucleoside 5'-triphosphate = DNA(n+1) + diphosphate. Its function is as follows. Required for replicative DNA synthesis. This DNA polymerase also exhibits 3' to 5' exonuclease activity. The protein is DNA polymerase III PolC-type of Listeria monocytogenes serovar 1/2a (strain ATCC BAA-679 / EGD-e).